The primary structure comprises 522 residues: Target of rapamycin complex 2 subunit MAPKAP1 (522 aa).

The tract at residues 2–184 (GFLDNPTIIL…KKIDVYLPLH (183 aa)) is interaction with MAP3K2. The interval 2 to 267 (GFLDNPTIIL…GFSTLALVEK (266 aa)) is interaction with NBN. Residue Thr86 is modified to Phosphothreonine. Phosphoserine is present on residues Ser128, Ser186, Ser315, and Ser356. A CRIM domain is found at 139 to 267 (QSILSVRLEQ…GFSTLALVEK (129 aa)). The tract at residues 279-353 (LFVRINAAHG…QSAWEFCLVR (75 aa)) is SIN1-type RBD. Residues 382 to 487 (HYKSFKVSMI…IVLKVNYILE (106 aa)) form the SIN1-type PH domain. Arg393 contacts a 1,2-diacyl-sn-glycero-3-phospho-(1D-myo-inositol-3,4,5-trisphosphate). Position 398 is a phosphothreonine (Thr398). Residues Lys428 and Lys464 each contribute to the a 1,2-diacyl-sn-glycero-3-phospho-(1D-myo-inositol-3,4,5-trisphosphate) site. The segment at 468 to 522 (FESDAATVNEIVLKVNYILESRASTARADYFAQKQRKLNRRTSFSFQKEKKSGQQ) is interaction with ATF2. A Phosphoserine modification is found at Ser510.

The protein belongs to the SIN1 family. Component of the mechanistic target of rapamycin complex 2 (mTORC2), consisting in two heterotretramers composed of MTOR, MLST8, RICTOR and MAPKAP1/SIN1. The mTORC2 core complex associates with PRR5/PROTOR1 and/or PRR5L/PROTOR2. Contrary to mTORC1, mTORC2 does not bind to and is not sensitive to FKBP12-rapamycin. Interacts with MAP3K2. Interacts with ATF2. Interacts with MAPK8. Interacts with GTP-bound HRAS and KRAS; inhibiting their activity. Interacts with IFNAR2. In terms of processing, phosphorylation at Ser-128 by PKC promotes relocalization to the perinuclear region, where the mTORC2 complex specifically mediates phosphorylation of SGK1. Phosphorylated at Thr-86 by AKT1 or RPS6KB1 in the presence of growth factors; the effect of this phosphorylation is however unclear. According to two studies, phosphorylation at Thr-86 by AKT1 is part of a positive feedback loop that increases mTORC2 activation. According to another study, phosphorylation at Thr-86 and Thr-398 by RPS6KB1 promotes dissociation from the mTORC2 complex, leading to inhibit mTORC2 signaling. As to expression, present in the lumenal epithelium and glandular epithelium of endometrium (at protein level).

The protein localises to the cell membrane. Its subcellular location is the cytoplasmic vesicle. The protein resides in the endoplasmic reticulum membrane. It localises to the early endosome membrane. It is found in the late endosome membrane. The protein localises to the lysosome membrane. Its subcellular location is the golgi apparatus membrane. The protein resides in the mitochondrion outer membrane. It localises to the cytoplasm. It is found in the perinuclear region. The protein localises to the nucleus. With respect to regulation, phosphatidylinositol 3,4,5-trisphosphate (PI(3,4,5)P3) promotes MTOR activation by relieving MAPKAP1/SIN1-mediated inhibition of MTOR that takes place in absence of PI(3,4,5)P3. In terms of biological role, component of the mechanistic target of rapamycin complex 2 (mTORC2), which transduces signals from growth factors to pathways involved in proliferation, cytoskeletal organization, lipogenesis and anabolic output. In response to growth factors, mTORC2 phosphorylates and activates AGC protein kinase family members, including AKT (AKT1, AKT2 and AKT3), PKC (PRKCA, PRKCB and PRKCE) and SGK1. In contrast to mTORC1, mTORC2 is nutrient-insensitive. Within the mTORC2 complex, MAPKAP1/SIN1 acts as a substrate adapter which recognizes and binds AGC protein kinase family members for phosphorylation by MTOR. mTORC2 plays a critical role in AKT1 activation by mediating phosphorylation of different sites depending on the context, such as 'Thr-450', 'Ser-473', 'Ser-477' or 'Thr-479', facilitating the phosphorylation of the activation loop of AKT1 on 'Thr-308' by PDPK1/PDK1 which is a prerequisite for full activation. mTORC2 catalyzes the phosphorylation of SGK1 at 'Ser-422' and of PRKCA on 'Ser-657'. The mTORC2 complex also phosphorylates various proteins involved in insulin signaling, such as FBXW8 and IGF2BP1. mTORC2 acts upstream of Rho GTPases to regulate the actin cytoskeleton, probably by activating one or more Rho-type guanine nucleotide exchange factors. mTORC2 promotes the serum-induced formation of stress-fibers or F-actin. MAPKAP1 inhibits MAP3K2 by preventing its dimerization and autophosphorylation. Inhibits HRAS and KRAS independently of mTORC2 complex. Enhances osmotic stress-induced phosphorylation of ATF2 and ATF2-mediated transcription. Involved in ciliogenesis, regulates cilia length through its interaction with CCDC28B independently of mTORC2 complex. The chain is Target of rapamycin complex 2 subunit MAPKAP1 (MAPKAP1) from Ovis aries (Sheep).